A 289-amino-acid polypeptide reads, in one-letter code: Phosphatidylglycerol--prolipoprotein diacylglyceryl transferase (289 aa).

A run of 4 helical transmembrane segments spans residues 18–38, 54–74, 86–106, and 116–136; these read FTIYWYGVLIGLGVIIGYVMA, DFVMYVIPVAIIFARLYYVIF, VFYIWEGGLAIHGALIGGVLT, and LSFWQLMDVAAPSILIGQAIG. Arginine 137 lines the a 1,2-diacyl-sn-glycero-3-phospho-(1'-sn-glycerol) pocket. The next 3 membrane-spanning stretches (helical) occupy residues 177–197, 205–225, and 236–256; these read HPTFLYESIWNFIGVVVLLLL, GELFFSYLIWYSIGRFFIEGM, and LRTAQIVSILLIVGALLLWWY.

The protein belongs to the Lgt family.

Its subcellular location is the cell membrane. It catalyses the reaction L-cysteinyl-[prolipoprotein] + a 1,2-diacyl-sn-glycero-3-phospho-(1'-sn-glycerol) = an S-1,2-diacyl-sn-glyceryl-L-cysteinyl-[prolipoprotein] + sn-glycerol 1-phosphate + H(+). The protein operates within protein modification; lipoprotein biosynthesis (diacylglyceryl transfer). Its function is as follows. Catalyzes the transfer of the diacylglyceryl group from phosphatidylglycerol to the sulfhydryl group of the N-terminal cysteine of a prolipoprotein, the first step in the formation of mature lipoproteins. The protein is Phosphatidylglycerol--prolipoprotein diacylglyceryl transferase of Halalkalibacterium halodurans (strain ATCC BAA-125 / DSM 18197 / FERM 7344 / JCM 9153 / C-125) (Bacillus halodurans).